The chain runs to 121 residues: Large ribosomal subunit protein bL12 (121 aa).

Belongs to the bacterial ribosomal protein bL12 family. Homodimer. Part of the ribosomal stalk of the 50S ribosomal subunit. Forms a multimeric L10(L12)X complex, where L10 forms an elongated spine to which 2 to 4 L12 dimers bind in a sequential fashion. Binds GTP-bound translation factors.

In terms of biological role, forms part of the ribosomal stalk which helps the ribosome interact with GTP-bound translation factors. Is thus essential for accurate translation. This chain is Large ribosomal subunit protein bL12, found in Pectobacterium carotovorum subsp. carotovorum (strain PC1).